The chain runs to 419 residues: Gustatory receptor for bitter taste 93a (419 aa).

The Cytoplasmic segment spans residues 1-55 (MFSSSSAMTGKRAESWSRLLLLWLYRCARGLLVLSSSLDRDKLQLKATKQGSRNR). The chain crosses the membrane as a helical span at residues 56–76 (FLHILWRCIVVMIYAGLWPML). Topologically, residues 77-90 (TSAVIGKRLESYAD) are extracellular. The chain crosses the membrane as a helical span at residues 91–111 (VLALAQSMSVSILAVISFVIQ). At 112–145 (ARGENQFREVLNRYLALYQRICLTTRLRHLFPTK) the chain is on the cytoplasmic side. Residues 146-166 (FVVFFLLKLFFTLCGCFHEII) form a helical membrane-spanning segment. Residues 167–184 (PLFENSHFDDISQMVGTG) are Extracellular-facing. The helical transmembrane segment at 185-205 (FGIYMWLGTLCVLDACFLGFL) threads the bilayer. The Cytoplasmic portion of the chain corresponds to 206–277 (VSGILYEHMA…NSFRRILQWQ (72 aa)). A helical transmembrane segment spans residues 278–298 (ILFYIYLNFINICLMLYQYIL). Residues 299-305 (HFLNDDE) are Extracellular-facing. The chain crosses the membrane as a helical span at residues 306–326 (VVFVSIVMAFVKLANLVLLMM). Residues 327-383 (CADYTVRQSEVPKKLPLDIVCSDMDERWDKSVETFLGQLQTQRLEIKVLGFFHLNNE) lie on the Cytoplasmic side of the membrane. A helical membrane pass occupies residues 384–404 (FILLILSAIISYLFILIQFGI). Residues 405–419 (TGGFEASEDIKNRFD) are Extracellular-facing.

It belongs to the insect chemoreceptor superfamily. Gustatory receptor (GR) family. Gr93a subfamily. In larvae, is expressed in neurons of the dorsal pharyngeal sense organs.

It localises to the cell membrane. In terms of biological role, gustatory receptor required for response to the bitter in taste neurons. Gr93a cells respond to bitter compounds such as caffeine. Flies avoid bitter substances, suggesting that Gr93a neuron activity is sufficient to mediate avoidance behavior. In Drosophila melanogaster (Fruit fly), this protein is Gustatory receptor for bitter taste 93a (Gr93a).